The chain runs to 259 residues: 3-methyl-2-oxobutanoate hydroxymethyltransferase (259 aa).

Residues aspartate 44 and aspartate 83 each coordinate Mg(2+). Residues 44–45, aspartate 83, and lysine 113 each bind 3-methyl-2-oxobutanoate; that span reads DS. Residue glutamate 115 participates in Mg(2+) binding. The active-site Proton acceptor is glutamate 183.

Belongs to the PanB family. As to quaternary structure, homodecamer; pentamer of dimers. Mg(2+) is required as a cofactor.

It localises to the cytoplasm. The catalysed reaction is 3-methyl-2-oxobutanoate + (6R)-5,10-methylene-5,6,7,8-tetrahydrofolate + H2O = 2-dehydropantoate + (6S)-5,6,7,8-tetrahydrofolate. It functions in the pathway cofactor biosynthesis; (R)-pantothenate biosynthesis; (R)-pantoate from 3-methyl-2-oxobutanoate: step 1/2. In terms of biological role, catalyzes the reversible reaction in which hydroxymethyl group from 5,10-methylenetetrahydrofolate is transferred onto alpha-ketoisovalerate to form ketopantoate. The sequence is that of 3-methyl-2-oxobutanoate hydroxymethyltransferase from Acaryochloris marina (strain MBIC 11017).